The sequence spans 291 residues: HTH-type transcriptional regulator DgcR (291 aa).

The region spanning 1 to 58 (MRLRHIEVFHAIYTTGSITNAAKALHVSQPSVSKVLSHAEMQLGFKLFERVKGRLIPT) is the HTH lysR-type domain. Positions 18 to 37 (ITNAAKALHVSQPSVSKVLS) form a DNA-binding region, H-T-H motif.

The protein belongs to the LysR transcriptional regulatory family.

In terms of biological role, transcriptional regulator that positively regulates the expression of the D-Glu gene cluster (DGC). The cluster includes dgcN and dgcA, which are involved in a deamination-independent D-glutamate degradation pathway, dgcR itself, dgcT, dgcP and dgcH. Acts by binding the consensus sequence upstream of dgcR, dgcT, dgcP and dgcH. This Pseudoalteromonas sp protein is HTH-type transcriptional regulator DgcR.